Reading from the N-terminus, the 349-residue chain is Bifunctional protein FolKE (349 aa).

The 2-amino-4-hydroxy-6-hydroxymethyldihydropteridine pyrophosphokinase stretch occupies residues 1 to 226; the sequence is MQTTYLSMGS…LFEIDSSKND (226 aa). A GTP cyclohydrolase 1 region spans residues 226-349; it reads DSIVLIKDIP…KRMEFLESLL (124 aa).

It in the N-terminal section; belongs to the HPPK family. This sequence in the C-terminal section; belongs to the GTP cyclohydrolase I family. As to quaternary structure, homomer.

The enzyme catalyses 6-hydroxymethyl-7,8-dihydropterin + ATP = (7,8-dihydropterin-6-yl)methyl diphosphate + AMP + H(+). The catalysed reaction is GTP + H2O = 7,8-dihydroneopterin 3'-triphosphate + formate + H(+). It functions in the pathway cofactor biosynthesis; 7,8-dihydroneopterin triphosphate biosynthesis; 7,8-dihydroneopterin triphosphate from GTP: step 1/1. Its pathway is cofactor biosynthesis; tetrahydrofolate biosynthesis; 2-amino-4-hydroxy-6-hydroxymethyl-7,8-dihydropteridine diphosphate from 7,8-dihydroneopterin triphosphate: step 4/4. This chain is Bifunctional protein FolKE (folKE), found in Lactococcus lactis subsp. cremoris (strain MG1363).